The chain runs to 184 residues: Photosystem I assembly protein Ycf4 (184 aa).

2 helical membrane-spanning segments follow: residues 22–42 (FCWA…GTSS) and 57–77 (ILFF…LFIS).

The protein belongs to the Ycf4 family.

The protein resides in the plastid. Its subcellular location is the chloroplast thylakoid membrane. Its function is as follows. Seems to be required for the assembly of the photosystem I complex. This Chloranthus spicatus (Chulantree) protein is Photosystem I assembly protein Ycf4.